Here is a 51-residue protein sequence, read N- to C-terminus: Magnetosome protein Mms5 (51 aa).

At 1–12 (MLSAKGVSLGLG) the chain is on the lumenal side. The tract at residues 9–16 (LGLGLGLG) is LG region. The helical transmembrane segment at 13–33 (LGLGAWGPVLLGVVGVAGAIA) threads the bilayer. Residues 34–51 (LYGYYKNRNAEPAAAEAV) lie on the Cytoplasmic side of the membrane.

This sequence belongs to the magnetosome MamD/Mms5 family. In terms of processing, seen in gels as a band of about 5 kDa, with an N-terminus that corresponds to residue 8, suggesting it may undergo N-terminal cleavage.

It is found in the magnetosome membrane. Functionally, might be involved in magnetite crystal growth. The polypeptide is Magnetosome protein Mms5 (Paramagnetospirillum magneticum (strain ATCC 700264 / AMB-1) (Magnetospirillum magneticum)).